The chain runs to 51 residues: Small ribosomal subunit protein uS13 (51 aa).

Belongs to the universal ribosomal protein uS13 family. As to quaternary structure, part of the 30S ribosomal subunit. Forms a loose heterodimer with protein S19. Forms two bridges to the 50S subunit in the 70S ribosome.

Located at the top of the head of the 30S subunit, it contacts several helices of the 16S rRNA. In the 70S ribosome it contacts the 23S rRNA (bridge B1a) and protein L5 of the 50S subunit (bridge B1b), connecting the 2 subunits; these bridges are implicated in subunit movement. Contacts the tRNAs in the A and P-sites. The polypeptide is Small ribosomal subunit protein uS13 (rpsM) (Lactococcus lactis subsp. cremoris (Streptococcus cremoris)).